A 299-amino-acid polypeptide reads, in one-letter code: UDP-N-acetylenolpyruvoylglucosamine reductase (299 aa).

Positions 28 to 193 (KVGGPADILA…LSAKFELQAG (166 aa)) constitute an FAD-binding PCMH-type domain. The active site involves arginine 172. The active-site Proton donor is the serine 222. Residue glutamate 292 is part of the active site.

Belongs to the MurB family. Requires FAD as cofactor.

The protein resides in the cytoplasm. The catalysed reaction is UDP-N-acetyl-alpha-D-muramate + NADP(+) = UDP-N-acetyl-3-O-(1-carboxyvinyl)-alpha-D-glucosamine + NADPH + H(+). Its pathway is cell wall biogenesis; peptidoglycan biosynthesis. In terms of biological role, cell wall formation. This Lactococcus lactis subsp. cremoris (strain SK11) protein is UDP-N-acetylenolpyruvoylglucosamine reductase.